The chain runs to 987 residues: uncharacterized protein (987 aa).

2 helical membrane-spanning segments follow: residues 12 to 32 and 958 to 978; these read FIYL…SVSG and VENN…LGIL.

This sequence to M.jannaschii MJ1393 and A.fulgidus AF2028.

The protein localises to the cell membrane. This is an uncharacterized protein from Methanocaldococcus jannaschii (strain ATCC 43067 / DSM 2661 / JAL-1 / JCM 10045 / NBRC 100440) (Methanococcus jannaschii).